The chain runs to 207 residues: Cytochrome c biogenesis ATP-binding export protein CcmA (207 aa).

The 204-residue stretch at 3–206 (LMAEGLSARR…AKSLEMTGFV (204 aa)) folds into the ABC transporter domain. Residue 35–42 (GPNGAGKS) participates in ATP binding.

It belongs to the ABC transporter superfamily. CcmA exporter (TC 3.A.1.107) family. In terms of assembly, the complex is composed of two ATP-binding proteins (CcmA) and two transmembrane proteins (CcmB).

It localises to the cell inner membrane. The catalysed reaction is heme b(in) + ATP + H2O = heme b(out) + ADP + phosphate + H(+). Functionally, part of the ABC transporter complex CcmAB involved in the biogenesis of c-type cytochromes; once thought to export heme, this seems not to be the case, but its exact role is uncertain. Responsible for energy coupling to the transport system. This chain is Cytochrome c biogenesis ATP-binding export protein CcmA, found in Rhizobium meliloti (strain 1021) (Ensifer meliloti).